The following is a 387-amino-acid chain: Dual-specificity RNA methyltransferase RlmN (387 aa).

Glu93 (proton acceptor) is an active-site residue. The Radical SAM core domain occupies 99 to 343 (EENRGTLCIS…TTVRKTRGDD (245 aa)). Cys106 and Cys348 are disulfide-bonded. [4Fe-4S] cluster is bound by residues Cys113, Cys117, and Cys120. S-adenosyl-L-methionine contacts are provided by residues 172 to 173 (GE), Ser204, 226 to 228 (SLH), and Asn305. Cys348 (S-methylcysteine intermediate) is an active-site residue.

The protein belongs to the radical SAM superfamily. RlmN family. Requires [4Fe-4S] cluster as cofactor.

Its subcellular location is the cytoplasm. It carries out the reaction adenosine(2503) in 23S rRNA + 2 reduced [2Fe-2S]-[ferredoxin] + 2 S-adenosyl-L-methionine = 2-methyladenosine(2503) in 23S rRNA + 5'-deoxyadenosine + L-methionine + 2 oxidized [2Fe-2S]-[ferredoxin] + S-adenosyl-L-homocysteine. It catalyses the reaction adenosine(37) in tRNA + 2 reduced [2Fe-2S]-[ferredoxin] + 2 S-adenosyl-L-methionine = 2-methyladenosine(37) in tRNA + 5'-deoxyadenosine + L-methionine + 2 oxidized [2Fe-2S]-[ferredoxin] + S-adenosyl-L-homocysteine. Its function is as follows. Specifically methylates position 2 of adenine 2503 in 23S rRNA and position 2 of adenine 37 in tRNAs. m2A2503 modification seems to play a crucial role in the proofreading step occurring at the peptidyl transferase center and thus would serve to optimize ribosomal fidelity. In Janthinobacterium sp. (strain Marseille) (Minibacterium massiliensis), this protein is Dual-specificity RNA methyltransferase RlmN.